A 420-amino-acid polypeptide reads, in one-letter code: MINIPRGTQDILPNETKKWRFIEARLDELMEVYNYQEIRTPIFESTELFARGVGDSTDVVQKEMYTFKDKGDRSITLRPEGTAAVVRSYIENKMQGLPNQPIKLYYNGPMFRYERKQKGRYRQFTQFGVEAIGAENPGVDAEVLAMAMHIYQSFGLKHLKLVINSIGDIDSRHEYNEALVKHFEPVIGDFCSDCQSRLHTNPMRILDCKIDKDKEAVKTAPRITEFLNETSKQYYADVKQHLDDLGVPYVEDPNLVRGLDYYTHTAFELMIDNPNYDGAITTLCGGGRYNGLLELLDGPHQTGIGFALSIERLLLALDEENIELDTEHDFDLFIVTMGEEADRYAVKLLNDLRRNGVKADKDYLQRKVKGQMKQADRLNANYTIVIGEQELQENKINVKNMQTGESESVDLDKLVNYFKK.

The protein belongs to the class-II aminoacyl-tRNA synthetase family. Homodimer.

The protein localises to the cytoplasm. The enzyme catalyses tRNA(His) + L-histidine + ATP = L-histidyl-tRNA(His) + AMP + diphosphate + H(+). The protein is Histidine--tRNA ligase of Staphylococcus saprophyticus subsp. saprophyticus (strain ATCC 15305 / DSM 20229 / NCIMB 8711 / NCTC 7292 / S-41).